The primary structure comprises 499 residues: Lysine--tRNA ligase (499 aa).

Mg(2+) is bound by residues Glu408 and Glu415.

The protein belongs to the class-II aminoacyl-tRNA synthetase family. Homodimer. Mg(2+) serves as cofactor.

It is found in the cytoplasm. It catalyses the reaction tRNA(Lys) + L-lysine + ATP = L-lysyl-tRNA(Lys) + AMP + diphosphate. In Thermoanaerobacter sp. (strain X514), this protein is Lysine--tRNA ligase.